A 314-amino-acid chain; its full sequence is DNA-directed RNA polymerase subunit alpha (314 aa).

The tract at residues 1 to 228 (MIEIEKPKIE…EHLNIFVGLT (228 aa)) is alpha N-terminal domain (alpha-NTD). The tract at residues 245–314 (KEKVLEMTIE…ELGLSLRKDD (70 aa)) is alpha C-terminal domain (alpha-CTD).

This sequence belongs to the RNA polymerase alpha chain family. Homodimer. The RNAP catalytic core consists of 2 alpha, 1 beta, 1 beta' and 1 omega subunit. When a sigma factor is associated with the core the holoenzyme is formed, which can initiate transcription.

The enzyme catalyses RNA(n) + a ribonucleoside 5'-triphosphate = RNA(n+1) + diphosphate. Functionally, DNA-dependent RNA polymerase catalyzes the transcription of DNA into RNA using the four ribonucleoside triphosphates as substrates. This is DNA-directed RNA polymerase subunit alpha from Geobacillus thermodenitrificans (strain NG80-2).